We begin with the raw amino-acid sequence, 144 residues long: Large ribosomal subunit protein uL13 (144 aa).

The protein belongs to the universal ribosomal protein uL13 family. In terms of assembly, part of the 50S ribosomal subunit.

Its function is as follows. This protein is one of the early assembly proteins of the 50S ribosomal subunit, although it is not seen to bind rRNA by itself. It is important during the early stages of 50S assembly. This chain is Large ribosomal subunit protein uL13, found in Clostridium tetani (strain Massachusetts / E88).